The primary structure comprises 957 residues: Collagen alpha-1(XXI) chain (957 aa).

The N-terminal stretch at 1–22 is a signal peptide; that stretch reads MAHYITFLCMVLVLLLQNSVLA. One can recognise a VWFA domain in the interval 37–211; that stretch reads DLVFILDGSY…KIREVMKQKL (175 aa). Residue Asn-62 is glycosylated (N-linked (GlcNAc...) asparagine). Positions 230 to 412 constitute a Laminin G-like domain; it reads GFDILLGLDV…VQKLRIYCDP (183 aa). Collagen-like domains are found at residues 448-500, 501-542, and 543-594; these read PGKP…GARG, LPGY…GDKG, and SPGF…SPGA. 2 disordered regions span residues 448-786 and 825-938; these read PGKP…KPGR and GSPG…ICDP. Low complexity-rich tracts occupy residues 451–462 and 471–481; these read PGLQGPKGDPGL and QPGQDGKPGYQ. Positions 507–517 are enriched in basic and acidic residues; the sequence is EPGRDGDKGDR. Composition is skewed to low complexity over residues 618-637 and 705-729; these read QKGE…PGMP and EKGI…IQGH. 4 consecutive Collagen-like domains span residues 681-733, 734-787, 825-882, and 884-934; these read SPGE…HGAK, GERG…PGRE, GSPG…GSQG, and GYPG…GPPG. Residues 732–742 are compositionally biased toward basic and acidic residues; sequence AKGERGEKGEP. Over residues 829–838 the composition is skewed to pro residues; that stretch reads IPGPPGPIGP. Low complexity predominate over residues 839–874; the sequence is EGPRGLPGLPGRDGVPGLVGVPGRPGVRGLKGLPGR. Residues 889–900 show a composition bias toward pro residues; that stretch reads QGPPGPPGPEGP.

It belongs to the fibril-associated collagens with interrupted helices (FACIT) family. In terms of tissue distribution, highly expressed in lymph node, jejunum, pancreas, stomach, trachea, testis, uterus and placenta; moderately expressed in brain, colon, lung, prostate, spinal cord, salivary gland and vascular smooth-muscle cells and very weakly expressed in heart, liver, kidney, bone marrow, spleen, thymus, skeletal muscle, adrenal gland and peripheral leukocytes. Expression in heart was higher in the right ventricle and atrium than in the left ventricle and atrium.

It is found in the secreted. The protein resides in the extracellular space. Its subcellular location is the extracellular matrix. It localises to the cytoplasm. This chain is Collagen alpha-1(XXI) chain (COL21A1), found in Homo sapiens (Human).